The following is a 508-amino-acid chain: Serine carboxypeptidase 3 (508 aa).

Positions 1-19 are cleaved as a signal peptide; that stretch reads MVTTPRLVSLLLLLALCAA. Residues 20–80 constitute a propeptide that is removed on maturation; that stretch reads AAGALRLPPD…PGQLLERRVT (61 aa). The disordered stretch occupies residues 48–67; it reads PKDSSSSSGRHGARVGEGNE. A Blocked amino end (Leu) modification is found at leucine 81. Cystine bridges form between cysteine 133–cysteine 373, cysteine 301–cysteine 316, and cysteine 339–cysteine 344. Asparagine 151 carries N-linked (GlcNAc...) asparagine glycosylation. The active site involves serine 223. Residue aspartate 411 is part of the active site. Residue cysteine 414 participates in substrate binding. Residue histidine 468 is part of the active site. Residues 492–508 constitute a propeptide that is removed on maturation; the sequence is EAVPEEESSTTSFYAAM.

The protein belongs to the peptidase S10 family. As to quaternary structure, monomer.

The protein localises to the secreted. It catalyses the reaction Release of a C-terminal amino acid with broad specificity.. Inhibited by mercuric ions. In Hordeum vulgare (Barley), this protein is Serine carboxypeptidase 3 (CBP3).